The chain runs to 208 residues: Uridine kinase (208 aa).

12–19 (GGSGGGKT) contacts ATP.

This sequence belongs to the uridine kinase family.

The protein localises to the cytoplasm. The enzyme catalyses uridine + ATP = UMP + ADP + H(+). It carries out the reaction cytidine + ATP = CMP + ADP + H(+). It functions in the pathway pyrimidine metabolism; CTP biosynthesis via salvage pathway; CTP from cytidine: step 1/3. Its pathway is pyrimidine metabolism; UMP biosynthesis via salvage pathway; UMP from uridine: step 1/1. The protein is Uridine kinase of Streptococcus pyogenes serotype M3 (strain ATCC BAA-595 / MGAS315).